The chain runs to 576 residues: RNA-directed RNA polymerase subunit beta (576 aa).

The 133-residue stretch at 259 to 391 (RLARDGSLLN…PNRKKTFCDG (133 aa)) folds into the RdRp catalytic domain. Asp-274, Asp-359, and Asp-360 together coordinate Mg(2+).

Homodimer; the replicase complex can dimerize. Part of the viral RNA-dependent RNA polymerase complex, the other subunits are the host ribosomal protein S1, EF-Tu and EF-Ts. S1 is needed for the initiation of genomic RNA (+)-strand replication. Mg(2+) is required as a cofactor.

It carries out the reaction RNA(n) + a ribonucleoside 5'-triphosphate = RNA(n+1) + diphosphate. This is the catalytic subunit of the viral RNA-dependent RNA polymerase complex. This complex is involved in viral RNA replication that produces (+)-stranded genomes via a complementary, (-)-stranded intermediate. Binds RNA cooperatively with the host ribosomal protein S1. In Enterobacteria phage SP (Bacteriophage SP), this protein is RNA-directed RNA polymerase subunit beta.